We begin with the raw amino-acid sequence, 343 residues long: Glycerol-3-phosphate dehydrogenase [NAD(P)+] (343 aa).

NADPH-binding residues include S11, W12, R32, and K106. Positions 106, 137, and 139 each coordinate sn-glycerol 3-phosphate. A141 is an NADPH binding site. 5 residues coordinate sn-glycerol 3-phosphate: K192, D245, S255, R256, and N257. K192 serves as the catalytic Proton acceptor. Residue R256 participates in NADPH binding. NADPH-binding residues include V280 and E282.

This sequence belongs to the NAD-dependent glycerol-3-phosphate dehydrogenase family.

The protein resides in the cytoplasm. It catalyses the reaction sn-glycerol 3-phosphate + NAD(+) = dihydroxyacetone phosphate + NADH + H(+). It carries out the reaction sn-glycerol 3-phosphate + NADP(+) = dihydroxyacetone phosphate + NADPH + H(+). It participates in membrane lipid metabolism; glycerophospholipid metabolism. Catalyzes the reduction of the glycolytic intermediate dihydroxyacetone phosphate (DHAP) to sn-glycerol 3-phosphate (G3P), the key precursor for phospholipid synthesis. In Syntrophomonas wolfei subsp. wolfei (strain DSM 2245B / Goettingen), this protein is Glycerol-3-phosphate dehydrogenase [NAD(P)+].